Reading from the N-terminus, the 478-residue chain is MWKAKTCFRQIYLTVLIRRYSRVAPPPSSVIRVTNNVAHLGPPKQGPLPRQLISLPPFPGHPLPGKNAGADGDDGDSGGHVTAISWVKYYFEEIYDKAIQTHFTKGLVQMEFRGRRDASREKEDGAIPMRKIKHNEVMQIGDKIWLPVSIAEMRISKRYDTIPSGTLYPNADEIAYLQRLVRFKDSAIIVLNKPPKLPVKGNVPIHNSMDALAAAALSFGNDEGPRLVHRLDRETSGLLVMGRTKESIDYLHSVFSDYKGRNSSCKAWNKACEAMYQQYWALVIGSPKEKEGLISAPLSKVLLDDGKTDRVVLAQGSGFEASQDAITEYKVLGPKINGCSWVELRPITSRKHQLRVHCAEALGTPIVGDYKYGWFVHKRWKQMPQVDIEPTTGKPYKLRRPEGLDVQKGSVLSKVPLLHLHCREMVLPNIAKFLHVMNQQETEPLHTGIIDKPDLLRFVASMPSHMKISWNLMSSYLV.

The transit peptide at 1-20 (MWKAKTCFRQIYLTVLIRRY) directs the protein to the mitochondrion. The S4 RNA-binding domain occupies 92–162 (EEIYDKAIQT…MRISKRYDTI (71 aa)). Asp-232 is an active-site residue.

This sequence belongs to the pseudouridine synthase RluA family.

It is found in the mitochondrion. The enzyme catalyses a uridine in RNA = a pseudouridine in RNA. The protein is RNA pseudouridine synthase 3, mitochondrial of Arabidopsis thaliana (Mouse-ear cress).